A 206-amino-acid polypeptide reads, in one-letter code: Protein phosphatase inhibitor 2 (206 aa).

Residues 1-36 (MAASTASHRPIKGILKNKTSAASPPVVPSAEQPRPI) form a disordered region. An N-acetylalanine modification is found at Ala-2. Positions 12–17 (KGILKN) are required for binding PPP1CC. Residues 44–56 (KSQKWDEMNILAT) are required for binding the 'RVXF' binding groove of PPP1CC. Phosphoserine; by ATM is present on Ser-45. A Phosphothreonine modification is found at Thr-74. The interval 75–143 (PYHNMIGDDE…EREKKRQFEM (69 aa)) is disordered. Acidic residues predominate over residues 81–92 (GDDEDAYSDSEG). Phosphoserine occurs at positions 88 and 90. Residues Thr-97 and Thr-117 each carry the phosphothreonine modification. Positions 111–121 (SEPKYRTREQE) are enriched in basic and acidic residues. Ser-122, Ser-123, and Ser-131 each carry phosphoserine. The segment covering 122–131 (SSGEEDNDLS) has biased composition (acidic residues). The span at 132–143 (PEEREKKRQFEM) shows a compositional bias: basic and acidic residues. The interval 148–151 (HYNE) is required for binding PPP1CC catalytic center, displacing metal ions and inhibition of PPP1CC catalytic activity. The tract at residues 164 to 206 (KDLHDDDEDEEMAETADGDSMNVEESSQGSTTSDHLQHKSQSS) is disordered. Positions 168–180 (DDDEDEEMAETAD) are enriched in acidic residues. Over residues 186 to 206 (VEESSQGSTTSDHLQHKSQSS) the composition is skewed to polar residues.

Belongs to the protein phosphatase inhibitor 2 family. In terms of assembly, heterodimer with PP1. Post-translationally, phosphorylation on Ser-45 by ATM activates PP1 by dissociating the PP1-PPP1R2 complex. Phosphorylation on Thr-74 by GSK3 activates PP1 by dissociating the PP1-PPP1R2 complex.

In terms of biological role, inhibitor of protein-phosphatase 1. The chain is Protein phosphatase inhibitor 2 (Ppp1r2) from Mus musculus (Mouse).